A 432-amino-acid polypeptide reads, in one-letter code: D-amino acid dehydrogenase (432 aa).

3–17 (VVVLGSGVVGVTSAW) is an FAD binding site.

Belongs to the DadA oxidoreductase family. The cofactor is FAD.

It carries out the reaction a D-alpha-amino acid + A + H2O = a 2-oxocarboxylate + AH2 + NH4(+). The protein operates within amino-acid degradation; D-alanine degradation; NH(3) and pyruvate from D-alanine: step 1/1. Its function is as follows. Oxidative deamination of D-amino acids. This is D-amino acid dehydrogenase from Enterobacter sp. (strain 638).